Consider the following 419-residue polypeptide: Oxamate carbamoyltransferase subunit AllG (419 aa).

Belongs to the AllG family. The OXTCase is composed of 3 subunits, AllF, AllG and AllH. It depends on Mg(2+) as a cofactor.

It catalyses the reaction oxamate + carbamoyl phosphate = N-carbamoyl-2-oxoglycine + phosphate. It participates in nitrogen metabolism; (S)-allantoin degradation. Its function is as follows. Component of a carbamoyltransferase involved in the anaerobic nitrogen utilization via the assimilation of allantoin. Catalyzes the conversion of oxalurate (N-carbamoyl-2-oxoglycine) to oxamate and carbamoyl phosphate. The protein is Oxamate carbamoyltransferase subunit AllG of Escherichia coli (strain K12).